We begin with the raw amino-acid sequence, 328 residues long: MEKMINDIAHRIIAGGSITEAEAIQLTQVQGTEVYDLFRAATRVKEHFVGNEVHLCSIINAKSGRCAENCAFCAQSAHHKTDAPVYPLVQEEEMLASARMAETNGSACFGIITSGTTVNGPELEQILTALRRIRKETTILPSCSLGIIDEETARKLKEAGMDTYHHNLETAASFFPQICTTHDYQDDVNTVRAVKKAGVKVCCGGIFGLGESAAQRVEMALTLKDLDVDSVPMNFLNPIEGTRLEGAANITAQECLKTIAIYRLILPGKRITVCGGREKNLRDLQSWIFFAGANGTMIGNYLTTLGRNVDTDLTMFSDLGLKTVMCAH.

The Radical SAM core domain maps to Phe-48–Arg-277. [4Fe-4S] cluster-binding residues include Cys-66, Cys-70, and Cys-73. [2Fe-2S] cluster contacts are provided by Ser-142 and Cys-202.

The protein belongs to the radical SAM superfamily. Biotin synthase family. Homodimer. [4Fe-4S] cluster is required as a cofactor. The cofactor is [2Fe-2S] cluster.

The catalysed reaction is (4R,5S)-dethiobiotin + (sulfur carrier)-SH + 2 reduced [2Fe-2S]-[ferredoxin] + 2 S-adenosyl-L-methionine = (sulfur carrier)-H + biotin + 2 5'-deoxyadenosine + 2 L-methionine + 2 oxidized [2Fe-2S]-[ferredoxin]. Its pathway is cofactor biosynthesis; biotin biosynthesis; biotin from 7,8-diaminononanoate: step 2/2. Catalyzes the conversion of dethiobiotin (DTB) to biotin by the insertion of a sulfur atom into dethiobiotin via a radical-based mechanism. This is Biotin synthase from Citrifermentans bemidjiense (strain ATCC BAA-1014 / DSM 16622 / JCM 12645 / Bem) (Geobacter bemidjiensis).